The primary structure comprises 238 residues: Thymidine kinase, cytosolic (238 aa).

Ser-2 carries the post-translational modification N-acetylserine. 2 positions are modified to phosphoserine: Ser-2 and Ser-13. ATP is bound by residues 26–33, 58–60, and 97–100; these read GPMFSGKS, DTR, and DEGQ. The active-site Proton acceptor is the Glu-98. A substrate-binding site is contributed by Phe-128. Residues Cys-153 and Cys-156 each coordinate Zn(2+). Substrate is bound by residues 172–176 and Tyr-181; that span reads VEVIG. Zn(2+) is bound by residues Cys-185 and Cys-188. Residues 206–208 carry the KEN box motif; that stretch reads KEN. Ser-235 bears the Phosphoserine mark.

This sequence belongs to the thymidine kinase family. In terms of assembly, homotetramer. Tetramerization from dimerization is induced by ATP and increases catalytic efficiency due to a high affinity for thymidine. Tetramerization is inhibited by phosphorylation at Ser-13. Interacts (via the KEN box) with FZR1. Post-translationally, phosphorylated on Ser-13 in mitosis. Phosphorylation of Ser-13 by CDK1 during mitosis reduces homotetramerization and catalytic efficiency when DNA replication is complete and intracellular TK1 is still present at a high level. In terms of processing, polyubiquitinated. Postmitosis, ubiquitination leads to proteasomal degradation. The KEN box sequence located at the C-terminal region targets for degradation by the anaphase promoting complex (APC/C) activated and rate-limited by FZR1.

Its subcellular location is the cytoplasm. The enzyme catalyses thymidine + ATP = dTMP + ADP + H(+). Functionally, cell-cycle-regulated enzyme of importance in nucleotide metabolism. Catalyzes the first enzymatic step in the salvage pathway converting thymidine into thymidine monophosphate. Transcriptional regulation limits expression to the S phase of the cell cycle and transient expression coincides with the oscillation in the intracellular dTTP concentration. The sequence is that of Thymidine kinase, cytosolic (TK1) from Bos taurus (Bovine).